The sequence spans 31 residues: Cytochrome b6-f complex subunit 6 (31 aa).

A helical membrane pass occupies residues L4–G24.

Belongs to the PetL family. In terms of assembly, the 4 large subunits of the cytochrome b6-f complex are cytochrome b6, subunit IV (17 kDa polypeptide, PetD), cytochrome f and the Rieske protein, while the 4 small subunits are PetG, PetL, PetM and PetN. The complex functions as a dimer.

The protein localises to the plastid. It localises to the chloroplast thylakoid membrane. Component of the cytochrome b6-f complex, which mediates electron transfer between photosystem II (PSII) and photosystem I (PSI), cyclic electron flow around PSI, and state transitions. PetL is important for photoautotrophic growth as well as for electron transfer efficiency and stability of the cytochrome b6-f complex. In Triticum aestivum (Wheat), this protein is Cytochrome b6-f complex subunit 6.